We begin with the raw amino-acid sequence, 1179 residues long: DNA-directed RNA polymerase subunit beta' (1179 aa).

Zn(2+) is bound by residues Cys-60, Cys-62, Cys-75, and Cys-78. Mg(2+) is bound by residues Asp-449, Asp-451, and Asp-453. Residues Cys-796, Cys-871, Cys-878, and Cys-881 each contribute to the Zn(2+) site.

It belongs to the RNA polymerase beta' chain family. In terms of assembly, the RNAP catalytic core consists of 2 alpha, 1 beta, 1 beta' and 1 omega subunit. When a sigma factor is associated with the core the holoenzyme is formed, which can initiate transcription. It depends on Mg(2+) as a cofactor. Zn(2+) serves as cofactor.

The catalysed reaction is RNA(n) + a ribonucleoside 5'-triphosphate = RNA(n+1) + diphosphate. Functionally, DNA-dependent RNA polymerase catalyzes the transcription of DNA into RNA using the four ribonucleoside triphosphates as substrates. The chain is DNA-directed RNA polymerase subunit beta' from Symbiobacterium thermophilum (strain DSM 24528 / JCM 14929 / IAM 14863 / T).